The following is a 197-amino-acid chain: 3-isopropylmalate dehydratase small subunit (197 aa).

It belongs to the LeuD family. LeuD type 1 subfamily. In terms of assembly, heterodimer of LeuC and LeuD.

The catalysed reaction is (2R,3S)-3-isopropylmalate = (2S)-2-isopropylmalate. It participates in amino-acid biosynthesis; L-leucine biosynthesis; L-leucine from 3-methyl-2-oxobutanoate: step 2/4. Its function is as follows. Catalyzes the isomerization between 2-isopropylmalate and 3-isopropylmalate, via the formation of 2-isopropylmaleate. This Mycobacterium sp. (strain JLS) protein is 3-isopropylmalate dehydratase small subunit.